The chain runs to 182 residues: Small ribosomal subunit protein uS5 (182 aa).

Residues 16-79 (FVDRLVHINR…ESAKRGMIYV (64 aa)) enclose the S5 DRBM domain.

Belongs to the universal ribosomal protein uS5 family. Part of the 30S ribosomal subunit. Contacts proteins S4 and S8.

Functionally, with S4 and S12 plays an important role in translational accuracy. Its function is as follows. Located at the back of the 30S subunit body where it stabilizes the conformation of the head with respect to the body. The chain is Small ribosomal subunit protein uS5 from Bartonella henselae (strain ATCC 49882 / DSM 28221 / CCUG 30454 / Houston 1) (Rochalimaea henselae).